A 350-amino-acid chain; its full sequence is Serine/arginine-rich splicing factor RS40 (350 aa).

RRM domains are found at residues 2 to 74 and 97 to 168; these read KPVF…WTKS and KTLF…YAVK. Basic and acidic residues-rich tracts occupy residues 73–82 and 167–187; these read KSERGGDKRS and VKDD…DRSP. Disordered stretches follow at residues 73–94 and 167–350; these read KSER…SSMR and VKDD…PADE. Residues Ser-193, Ser-195, and Ser-211 each carry the phosphoserine modification. Composition is skewed to basic and acidic residues over residues 216 to 227 and 240 to 255; these read YRKERTSPDYGR and GSPE…DSPR. Phosphoserine is present on residues Ser-241, Ser-262, Ser-278, Ser-298, Ser-308, Ser-335, and Ser-340. A compositionally biased stretch (basic and acidic residues) spans 272–289; sequence NKRERMSPNHSPFKKESP. Basic and acidic residues predominate over residues 299-308; the sequence is PIERRERSRS.

The protein belongs to the splicing factor SR family. RS subfamily. As to quaternary structure, component of the spliceosome. Interacts with SNRNP35. Interacts with CYP59. Interacts with RCF3 and CPL1. Interacts with DRB1/HYL1 and SE. As to expression, highly expressed in roots and flowers. A presumably longer alternatively spliced form is found in leaves, stems and flowers.

The protein localises to the nucleus. The protein resides in the nucleus speckle. Required for constitutive and alternative pre-mRNA splicing. Involved in primary miRNA processing and pri-miRNA biogenesis. Binds both intronless and intron-containing pri-miRNAs. The protein is Serine/arginine-rich splicing factor RS40 (RS40) of Arabidopsis thaliana (Mouse-ear cress).